Here is a 629-residue protein sequence, read N- to C-terminus: tRNA uridine 5-carboxymethylaminomethyl modification enzyme MnmG (629 aa).

An FAD-binding site is contributed by 13-18 (GGGHAG). 273–287 (GPRYCPSIEDKIHRF) provides a ligand contact to NAD(+).

This sequence belongs to the MnmG family. As to quaternary structure, homodimer. Heterotetramer of two MnmE and two MnmG subunits. Requires FAD as cofactor.

The protein localises to the cytoplasm. Its function is as follows. NAD-binding protein involved in the addition of a carboxymethylaminomethyl (cmnm) group at the wobble position (U34) of certain tRNAs, forming tRNA-cmnm(5)s(2)U34. This Shewanella denitrificans (strain OS217 / ATCC BAA-1090 / DSM 15013) protein is tRNA uridine 5-carboxymethylaminomethyl modification enzyme MnmG.